Consider the following 78-residue polypeptide: Acyl carrier protein (78 aa).

The Carrier domain maps to 2-77 (STIEESVKSI…AAIDFIKESK (76 aa)). Position 37 is an O-(pantetheine 4'-phosphoryl)serine (Ser37).

Belongs to the acyl carrier protein (ACP) family. Post-translationally, 4'-phosphopantetheine is transferred from CoA to a specific serine of apo-ACP by AcpS. This modification is essential for activity because fatty acids are bound in thioester linkage to the sulfhydryl of the prosthetic group.

The protein resides in the cytoplasm. It functions in the pathway lipid metabolism; fatty acid biosynthesis. Carrier of the growing fatty acid chain in fatty acid biosynthesis. In Wigglesworthia glossinidia brevipalpis, this protein is Acyl carrier protein.